The sequence spans 602 residues: DEAD-box ATP-dependent RNA helicase 53 (602 aa).

The segment covering 33-43 has biased composition (low complexity); sequence ASPLDPCRGPA. The interval 33–76 is disordered; it reads ASPLDPCRGPAAPEPPRRRAFHGSPSPLGFRSTPASWSSPEAGA. The Q motif motif lies at 84 to 112; sequence LEVARLGISPWIVERLAARGITRLFPIQR. The Helicase ATP-binding domain maps to 115-288; it reads LDPAMQGKDM…SKYLKDPIII (174 aa). 128–135 provides a ligand contact to ATP; the sequence is ARTGTGKT. The DEAD box signature appears at 236–239; sequence DEAD. Residues 317–462 form the Helicase C-terminal domain; it reads ILGPLIKEHA…LPKIEVADEA (146 aa). A disordered region spans residues 503 to 602; the sequence is FGDFDGFGSS…GRSGGFDDSN (100 aa).

Belongs to the DEAD box helicase family. DDX21/DDX50 subfamily.

The enzyme catalyses ATP + H2O = ADP + phosphate + H(+). This Oryza sativa subsp. japonica (Rice) protein is DEAD-box ATP-dependent RNA helicase 53.